The sequence spans 400 residues: Cytohesin-3 (400 aa).

A coiled-coil region spans residues 14 to 61 (EDLSLEEREELLDIRRRKKELIDDIERLKYEIAEVMTEIDNLTSVEES). The SEC7 domain occupies 77-206 (FNMDPKKGIQ…IIMLNTSLHN (130 aa)). Residues 265–381 (PDREGWLLKL…WMKSIKASIS (117 aa)) form the PH domain. A 1,2-diacyl-sn-glycero-3-phospho-(1D-myo-inositol-3,4,5-trisphosphate) contacts are provided by residues 273–281 (KLGGGRVKT), arginine 285, tyrosine 296, arginine 306, and asparagine 355. Residues 392 to 400 (RKRRIANKK) are C-terminal autoinhibitory region.

As to quaternary structure, interacts with TAMALIN. Present in all tissues tested, with highest protein levels in brain and adrenal.

It localises to the cytoplasm. The protein localises to the cytosol. The protein resides in the cell membrane. In terms of biological role, promotes guanine-nucleotide exchange on ARF1. Promotes the activation of ARF factors through replacement of GDP with GTP. In Rattus norvegicus (Rat), this protein is Cytohesin-3 (Cyth3).